The primary structure comprises 129 residues: C-type natriuretic peptide 1 (129 aa).

An N-terminal signal peptide occupies residues 1–24 (MSYKRGTCLGFIMLLMVSHHHTKG). Positions 25–107 (KPLSSLQNLS…SRRYRQRNKK (83 aa)) are excised as a propeptide. Residues Cys113 and Cys129 are joined by a disulfide bond.

Belongs to the natriuretic peptide family.

The protein localises to the secreted. In terms of biological role, hormone which plays a role in endochondral ossification through regulation of cartilaginous growth plate chondrocytes proliferation and differentiation. May also be vasoactive and natriuretic. May be important for freshwater adaptation. This chain is C-type natriuretic peptide 1, found in Aquarana catesbeiana (American bullfrog).